Reading from the N-terminus, the 660-residue chain is Solute carrier family 5 member 4B (660 aa).

Residues 1–27 (MASTLSPSITPQTEEPPVVPVRIQNAA) lie on the Cytoplasmic side of the membrane. A helical transmembrane segment spans residues 28–48 (DISVIVIYFIVVLAVGLWSMV). The Extracellular portion of the chain corresponds to 49–54 (RSNRGT). The helical transmembrane segment at 55–75 (VGGFFLAGHDMAWWPMGASLF) threads the bilayer. Topologically, residues 76–82 (ASNIGSN) are cytoplasmic. A helical membrane pass occupies residues 83-103 (HFVGLAGTGAASGIAIAAVEW). Residues 104 to 105 (NA) lie on the Extracellular side of the membrane. The chain crosses the membrane as a helical span at residues 106–126 (LLMVLVLGWVFLPIYIKAGVL). The Cytoplasmic segment spans residues 127–142 (TMPEYLRKRFGGKRLQ). Residues 143 to 163 (IYLSVLSLFIMVALQTSSIIF) traverse the membrane as a helical segment. Residues 164-166 (SGA) lie on the Extracellular side of the membrane. Residues 167–187 (IFIQLALGLNLYLAVFILLAI) form a helical membrane-spanning segment. Topologically, residues 188–208 (TAFYTVAGGLASVIYTDSVQT) are cytoplasmic. A helical membrane pass occupies residues 209–229 (FIMLLGSLILMGFAFAEVGGY). The Extracellular portion of the chain corresponds to 230 to 277 (ESFTEKYMNAIPSVVEGDNLTISPKCYTPQPDSFHVFRDPVTGDIPWP). Residues 278-298 (GLIFGMTILAIWYWCADQVIV) form a helical membrane-spanning segment. Topologically, residues 299-313 (QRCLCGKNMSHVKAA) are cytoplasmic. Residues 314 to 334 (CILCGYLKLLPMFLMVMPGMI) traverse the membrane as a helical segment. The Extracellular portion of the chain corresponds to 335–380 (SRILYTDKVACVVPSECEKQCGTAVGCTNYAYPTLVLELMPDGLRG). Residues 381–401 (LMLSVMLASLMSSLTSIFNSA) traverse the membrane as a helical segment. Over 402-423 (STLFTIDLYTKIRKKASERELM) the chain is Cytoplasmic. A helical transmembrane segment spans residues 424–444 (IAGRIFGMVLIAVSILWVPLV). Topologically, residues 445 to 455 (QVSQNGQLFHY) are extracellular. The chain crosses the membrane as a helical span at residues 456–476 (IGSVSSYLGPPLGAVFMLAIF). Residues 477-484 (FKRVNEQG) lie on the Cytoplasmic side of the membrane. A helical membrane pass occupies residues 485–505 (AFWGLMVGLVVGLIRLIAEFV). Residues 506–526 (YGTGSCVAPSNCPKIICGVHY) are Extracellular-facing. The helical transmembrane segment at 527 to 547 (MYFAIILFFVSIIVILGVSFL) threads the bilayer. Topologically, residues 548-639 (TEPIPDVHLY…DTSEKPLWRT (92 aa)) are cytoplasmic. A helical transmembrane segment spans residues 640–660 (VMNINAVLLLGVAVFVHAYFA).

It belongs to the sodium:solute symporter (SSF) (TC 2.A.21) family. Expressed in small intestine. Expressed in kidney.

The protein resides in the cell membrane. It carries out the reaction D-glucose(out) + 2 Na(+)(out) = D-glucose(in) + 2 Na(+)(in). With respect to regulation, inhibited by phlorizin. Functionally, low-affinity sodium/D-glucose symporter. Generates D-glucose-induced depolarization in a pH-independent manner. The polypeptide is Solute carrier family 5 member 4B (Mus musculus (Mouse)).